A 303-amino-acid chain; its full sequence is Centromere protein O (303 aa).

Residues 38–77 (AALRKNQELVLELRKKRDELKAKIERHKAEIQAFRGREEA) are a coiled coil.

The protein belongs to the CENP-O/MCM21 family.

Its subcellular location is the nucleus. The protein resides in the chromosome. The protein localises to the centromere. In terms of biological role, probable component of a centromeric complex involved in assembly of kinetochore proteins, mitotic progression and chromosome segregation. The sequence is that of Centromere protein O (cenpo) from Xenopus tropicalis (Western clawed frog).